A 148-amino-acid chain; its full sequence is Cytochrome c-type biogenesis protein CcmE (148 aa).

Over 1–7 (MTRKQRR) the chain is Cytoplasmic. Residues 8 to 28 (LYFVLLGMAALGGAVALVLTA) form a helical; Signal-anchor for type II membrane protein membrane-spanning segment. Topologically, residues 29-148 (ISDSLVYFYS…QWNDGKQPKQ (120 aa)) are periplasmic. Heme is bound by residues His121 and Tyr125.

The protein belongs to the CcmE/CycJ family.

It is found in the cell inner membrane. In terms of biological role, heme chaperone required for the biogenesis of c-type cytochromes. Transiently binds heme delivered by CcmC and transfers the heme to apo-cytochromes in a process facilitated by CcmF and CcmH. In Paramagnetospirillum magneticum (strain ATCC 700264 / AMB-1) (Magnetospirillum magneticum), this protein is Cytochrome c-type biogenesis protein CcmE.